The following is a 188-amino-acid chain: Insulin-like growth factor 1 (188 aa).

Residues 45–73 are b; sequence GPETLCGAELVDTLQFVCGERGFYFSKPT. 3 disulfide bridges follow: cysteine 50/cysteine 92, cysteine 62/cysteine 105, and cysteine 91/cysteine 96. Residues 74-85 form a c region; that stretch reads GYGPSSRRSHNR. The a stretch occupies residues 86–106; the sequence is GIVDECCFQSCELRRLEMYCA. The segment at 107–114 is d; the sequence is PVKSGKAA. Positions 115–188 are cleaved as a propeptide — e peptide; it reads RSVRAQRHTD…GNTGGRNYRM (74 aa). The tract at residues 115-188 is disordered; sequence RSVRAQRHTD…GNTGGRNYRM (74 aa). The span at 140–153 shows a compositional bias: basic and acidic residues; the sequence is RGTERRTAQHPDKT.

The protein belongs to the insulin family. As to expression, all the isoforms are expressed in embryos, juvenile and adult liver, muscle and brain. At least one isoform is expressed in heart, kidney, testes, ovary, adipose tissue and spleen of juvenile salmon.

It is found in the secreted. Functionally, the insulin-like growth factors, isolated from plasma, are structurally and functionally related to insulin but have a much higher growth-promoting activity. Acts as a ligand for IGF1R. Binds to the alpha subunit of IGF1R, leading to the activation of the intrinsic tyrosine kinase activity which autophosphorylates tyrosine residues in the beta subunit thus initiatiating a cascade of down-stream signaling events leading to activation of the PI3K-AKT/PKB and the Ras-MAPK pathways. Binds to integrins. Its binding to integrins and subsequent ternary complex formation with integrins and IGFR1 are essential for IGF1 signaling. The chain is Insulin-like growth factor 1 from Oncorhynchus kisutch (Coho salmon).